Reading from the N-terminus, the 382-residue chain is Probable purine permease 4 (382 aa).

The next 10 helical transmembrane spans lie at 25-45 (LTLLIVTYFFLFFGSIASSLL), 62-82 (WVQSAGFPLLLILIYFPHYVL), 98-118 (LIFSVLIGLVLGFNNFLFSWG), 121-141 (YLPVSTSSLLLSTQLVFTLIL), 150-170 (ITFSNLNCVVLLTLSSVLLAL), 185-205 (YFIGYVSTIGAGLLFALYLPV), 224-244 (LVMEFAATVFATIGMACEGGF), 260-280 (TFYWTFAILANVVTWQLSFAA), 291-311 (ITGGICMTALLAMNVIGGVVA), and 315-335 (VFGGVKIVSTVLCIWGFSSYT). The 105-residue stretch at 66-170 (AGFPLLLILI…LTLSSVLLAL (105 aa)) folds into the EamA domain. Residues 345-364 (EEKEKGEYSGVKTTEDSGEM) are disordered.

This sequence belongs to the purine permeases (TC 2.A.7.14) family.

Its subcellular location is the membrane. This Arabidopsis thaliana (Mouse-ear cress) protein is Probable purine permease 4 (PUP4).